Here is a 571-residue protein sequence, read N- to C-terminus: MRTSQYLFSTLKETPNDAQVVSHQLMLRAGMIRSMASGLYNWLPTGVKVLKKVENIIREEMNKGGAIEVLMPVVQSAELWQESGRWEQYGPELLRFSDRGNRDFVLGPTHEEVITDLVRREVSSYKQLPLNLYQIQTKFRDEVRPRFGVMRSREFVMKDAYSFHTTQESLQQTYEVMYQVYTNIFTRLGLDFRAVQADTGSIGGSASHEFQVLASSGEDDVVFSTESDFAANIELAEAIAVGERQAPGKAMELVDTPNAKTIAELVEQFNLPIEKTVKTLIVKGATEDAPLVALIIRGDHELNEIKAQKHPLVADPLEFADETEIKAKIGAGVGSLGPVNLNIPAIIDRSVALMSDFGAGANIDGKHYFNINWERDAAMPEAFDLRNVAEGDPSPDGKGTLQIKRGIEVGHIFQLGKKYSEAMNATVQGEDGKPLVMTMGCYGIGVTRVVAAAIEQHHDERGIIWPTDEIAPFTVAIVPMNMHKSESVRAFAEELYQTLKAQGVDVIFDDRKERPGVMFADMELIGVPHMVVIGEKNLDKGEIEYKNRRNGEKQMIAKDRLLAFLAENVKA.

Belongs to the class-II aminoacyl-tRNA synthetase family. ProS type 1 subfamily. In terms of assembly, homodimer.

It is found in the cytoplasm. The enzyme catalyses tRNA(Pro) + L-proline + ATP = L-prolyl-tRNA(Pro) + AMP + diphosphate. In terms of biological role, catalyzes the attachment of proline to tRNA(Pro) in a two-step reaction: proline is first activated by ATP to form Pro-AMP and then transferred to the acceptor end of tRNA(Pro). As ProRS can inadvertently accommodate and process non-cognate amino acids such as alanine and cysteine, to avoid such errors it has two additional distinct editing activities against alanine. One activity is designated as 'pretransfer' editing and involves the tRNA(Pro)-independent hydrolysis of activated Ala-AMP. The other activity is designated 'posttransfer' editing and involves deacylation of mischarged Ala-tRNA(Pro). The misacylated Cys-tRNA(Pro) is not edited by ProRS. The protein is Proline--tRNA ligase of Actinobacillus succinogenes (strain ATCC 55618 / DSM 22257 / CCUG 43843 / 130Z).